Reading from the N-terminus, the 388-residue chain is MNLHEYQGKQLFAEYGLPVSKGYAVDTPEEAAEACDKIGGSEWVVKAQVHAGGRGKAGGVKLVRSKEDAKAFAQQWLGKRLVTYQTDANGQPVTKILVESCTDIAKELYLGAVVDRSSRRIVFMASTEGGVDIEKIAHDTPEKILKATIDPLVGAQPFQGRELAFQLGLEGKQVAQFAKIFVGLAKLFQDHDLALLEVNPLVIKADGDLHCLDAKINIDANAMYRQPKLKTFHDPSQDDPREAHAAKFELNYVALEGNIGCMVNGAGLAMGTMDIVNLHGGKPANFLDVGGGATKERVTEAFKIILSDTNVAAVLVNIFGGIVRCDMIAEGIIGAVKEVGVKIPVVVRLEGNNAELGAKVLAESGLNIIAATSLTDAAQQVVKAAEGK.

One can recognise an ATP-grasp domain in the interval lysine 9–histidine 244. ATP-binding positions include lysine 46, glycine 53 to glycine 55, glutamate 99, threonine 102, and glutamate 107. The Mg(2+) site is built by asparagine 199 and aspartate 213. Substrate-binding positions include asparagine 264 and glycine 321–valine 323.

The protein belongs to the succinate/malate CoA ligase beta subunit family. In terms of assembly, heterotetramer of two alpha and two beta subunits. Requires Mg(2+) as cofactor.

It catalyses the reaction succinate + ATP + CoA = succinyl-CoA + ADP + phosphate. The enzyme catalyses GTP + succinate + CoA = succinyl-CoA + GDP + phosphate. It participates in carbohydrate metabolism; tricarboxylic acid cycle; succinate from succinyl-CoA (ligase route): step 1/1. Succinyl-CoA synthetase functions in the citric acid cycle (TCA), coupling the hydrolysis of succinyl-CoA to the synthesis of either ATP or GTP and thus represents the only step of substrate-level phosphorylation in the TCA. The beta subunit provides nucleotide specificity of the enzyme and binds the substrate succinate, while the binding sites for coenzyme A and phosphate are found in the alpha subunit. This chain is Succinate--CoA ligase [ADP-forming] subunit beta, found in Pseudomonas fluorescens (strain ATCC BAA-477 / NRRL B-23932 / Pf-5).